We begin with the raw amino-acid sequence, 194 residues long: NAD(P)H:quinone oxidoreductase (194 aa).

It belongs to the SsuE family. As to quaternary structure, homotetramer. FMN serves as cofactor.

The catalysed reaction is a quinone + NADH + H(+) = a quinol + NAD(+). It carries out the reaction a quinone + NADPH + H(+) = a quinol + NADP(+). The enzyme apparently serves as a quinone reductase in connection with conjugation reactions of hydroquinones involved in detoxification pathways. This Solanum tuberosum (Potato) protein is NAD(P)H:quinone oxidoreductase.